The chain runs to 164 residues: SsrA-binding protein (164 aa).

This sequence belongs to the SmpB family.

The protein resides in the cytoplasm. Its function is as follows. Required for rescue of stalled ribosomes mediated by trans-translation. Binds to transfer-messenger RNA (tmRNA), required for stable association of tmRNA with ribosomes. tmRNA and SmpB together mimic tRNA shape, replacing the anticodon stem-loop with SmpB. tmRNA is encoded by the ssrA gene; the 2 termini fold to resemble tRNA(Ala) and it encodes a 'tag peptide', a short internal open reading frame. During trans-translation Ala-aminoacylated tmRNA acts like a tRNA, entering the A-site of stalled ribosomes, displacing the stalled mRNA. The ribosome then switches to translate the ORF on the tmRNA; the nascent peptide is terminated with the 'tag peptide' encoded by the tmRNA and targeted for degradation. The ribosome is freed to recommence translation, which seems to be the essential function of trans-translation. The chain is SsrA-binding protein from Corynebacterium efficiens (strain DSM 44549 / YS-314 / AJ 12310 / JCM 11189 / NBRC 100395).